We begin with the raw amino-acid sequence, 424 residues long: Serine--tRNA ligase (424 aa).

Position 229–231 (229–231 (TAE)) interacts with L-serine. An ATP-binding site is contributed by 260–262 (RRE). Residue Glu-283 coordinates L-serine. 347–350 (EVSS) serves as a coordination point for ATP. L-serine is bound at residue Ser-383.

It belongs to the class-II aminoacyl-tRNA synthetase family. Type-1 seryl-tRNA synthetase subfamily. Homodimer. The tRNA molecule binds across the dimer.

It is found in the cytoplasm. It catalyses the reaction tRNA(Ser) + L-serine + ATP = L-seryl-tRNA(Ser) + AMP + diphosphate + H(+). The enzyme catalyses tRNA(Sec) + L-serine + ATP = L-seryl-tRNA(Sec) + AMP + diphosphate + H(+). It participates in aminoacyl-tRNA biosynthesis; selenocysteinyl-tRNA(Sec) biosynthesis; L-seryl-tRNA(Sec) from L-serine and tRNA(Sec): step 1/1. Catalyzes the attachment of serine to tRNA(Ser). Is also able to aminoacylate tRNA(Sec) with serine, to form the misacylated tRNA L-seryl-tRNA(Sec), which will be further converted into selenocysteinyl-tRNA(Sec). The polypeptide is Serine--tRNA ligase (Roseiflexus sp. (strain RS-1)).